The sequence spans 402 residues: Deoxyguanosinetriphosphate triphosphohydrolase-like protein (402 aa).

Residues 73–217 form the HD domain; sequence RLTHTIEVAQ…AAIADDIAYN (145 aa).

It belongs to the dGTPase family. Type 2 subfamily.

This Brucella suis (strain ATCC 23445 / NCTC 10510) protein is Deoxyguanosinetriphosphate triphosphohydrolase-like protein.